We begin with the raw amino-acid sequence, 512 residues long: Serine--tRNA ligase, cytoplasmic (512 aa).

N-acetylmethionine is present on M1. The interval 9-61 is interaction with tRNA; it reads RVDKGGDPALIRETQEKRFKDPGLVDQLVKADSEWRRCRFRADNLNKLKNLCS. A Phosphoserine modification is found at S241. Positions 271 and 302 each coordinate L-serine. ATP is bound by residues 302-304 and 318-321; these read RQE and VHQF. K323 carries the N6-acetyllysine modification. E325 is an L-serine binding site. Residue 391–394 coordinates ATP; the sequence is ELVS. N427 and T429 together coordinate L-serine. The tract at residues 472-512 is disordered; it reads KPAPIDQEPSKKQKKQHEGSKKKAKEVTLESQLQNMEVTEA. Residues 479 to 499 are compositionally biased toward basic and acidic residues; the sequence is EPSKKQKKQHEGSKKKAKEVT. Positions 482-494 match the Nuclear localization signal motif; the sequence is KKQKKQHEGSKKK. A compositionally biased stretch (polar residues) spans 500–512; sequence LESQLQNMEVTEA.

The protein belongs to the class-II aminoacyl-tRNA synthetase family. Type-1 seryl-tRNA synthetase subfamily. In terms of assembly, homodimer. The tRNA molecule may bind across the dimer. Interacts with SIRT2. Interacts with METTL6; interaction is required for the tRNA N(3)-methylcytidine methyltransferase activity of METTL6.

The protein resides in the cytoplasm. The protein localises to the nucleus. The catalysed reaction is tRNA(Ser) + L-serine + ATP = L-seryl-tRNA(Ser) + AMP + diphosphate + H(+). It carries out the reaction tRNA(Sec) + L-serine + ATP = L-seryl-tRNA(Sec) + AMP + diphosphate + H(+). The protein operates within aminoacyl-tRNA biosynthesis; selenocysteinyl-tRNA(Sec) biosynthesis; L-seryl-tRNA(Sec) from L-serine and tRNA(Sec): step 1/1. Catalyzes the attachment of serine to tRNA(Ser) in a two-step reaction: serine is first activated by ATP to form Ser-AMP and then transferred to the acceptor end of tRNA(Ser). Is probably also able to aminoacylate tRNA(Sec) with serine, to form the misacylated tRNA L-seryl-tRNA(Sec), which will be further converted into selenocysteinyl-tRNA(Sec). In the nucleus, binds to the VEGFA core promoter and prevents MYC binding and transcriptional activation by MYC. Recruits SIRT2 to the VEGFA promoter, promoting deacetylation of histone H4 at 'Lys-16' (H4K16). Thereby, inhibits the production of VEGFA and sprouting angiogenesis mediated by VEGFA. The polypeptide is Serine--tRNA ligase, cytoplasmic (SARS1) (Cricetulus griseus (Chinese hamster)).